A 130-amino-acid polypeptide reads, in one-letter code: Small ribosomal subunit protein uS9 (130 aa).

The protein belongs to the universal ribosomal protein uS9 family.

This Variovorax paradoxus (strain S110) protein is Small ribosomal subunit protein uS9.